Here is a 291-residue protein sequence, read N- to C-terminus: GTPase Era (291 aa).

The Era-type G domain occupies 2–167 (KSGFVSIIGR…LDEIVKCLNE (166 aa)). The interval 10–17 (GRTNAGKS) is G1. 10-17 (GRTNAGKS) lines the GTP pocket. The G2 stretch occupies residues 36–40 (NATRR). A G3 region spans residues 57–60 (DTPG). Residues 57–61 (DTPGL) and 116–119 (NKVD) each bind GTP. A G4 region spans residues 116–119 (NKVD). Positions 146 to 148 (YSS) are G5. In terms of domain architecture, KH type-2 spans 186–274 (YRDFILESIY…LLKLFVTVKK (89 aa)).

Belongs to the TRAFAC class TrmE-Era-EngA-EngB-Septin-like GTPase superfamily. Era GTPase family. As to quaternary structure, monomer.

It localises to the cytoplasm. Its subcellular location is the cell inner membrane. Its function is as follows. An essential GTPase that binds both GDP and GTP, with rapid nucleotide exchange. Plays a role in 16S rRNA processing and 30S ribosomal subunit biogenesis and possibly also in cell cycle regulation and energy metabolism. The sequence is that of GTPase Era from Campylobacter jejuni subsp. doylei (strain ATCC BAA-1458 / RM4099 / 269.97).